We begin with the raw amino-acid sequence, 141 residues long: Galactose-6-phosphate isomerase subunit LacA (141 aa).

It belongs to the LacAB/RpiB family. Heteromultimeric protein consisting of LacA and LacB.

The enzyme catalyses aldehydo-D-galactose 6-phosphate = keto-D-tagatose 6-phosphate. Its pathway is carbohydrate metabolism; D-galactose 6-phosphate degradation; D-tagatose 6-phosphate from D-galactose 6-phosphate: step 1/1. This Streptococcus agalactiae serotype Ia (strain ATCC 27591 / A909 / CDC SS700) protein is Galactose-6-phosphate isomerase subunit LacA.